The sequence spans 242 residues: Uridylate kinase (242 aa).

ATP is bound at residue 11–14 (KLSG). Residue glycine 53 coordinates UMP. ATP contacts are provided by glycine 54 and arginine 58. UMP contacts are provided by residues aspartate 73 and 134 to 141 (SGNPFFTT). Residues threonine 161, tyrosine 167, and aspartate 170 each coordinate ATP.

It belongs to the UMP kinase family. In terms of assembly, homohexamer.

Its subcellular location is the cytoplasm. It carries out the reaction UMP + ATP = UDP + ADP. The protein operates within pyrimidine metabolism; CTP biosynthesis via de novo pathway; UDP from UMP (UMPK route): step 1/1. Inhibited by UTP. Catalyzes the reversible phosphorylation of UMP to UDP. In Thermosynechococcus vestitus (strain NIES-2133 / IAM M-273 / BP-1), this protein is Uridylate kinase.